We begin with the raw amino-acid sequence, 322 residues long: Major serine/threonine-protein phosphatase PP2A-2 catalytic subunit (322 aa).

4 residues coordinate Mn(2+): Asp-70, His-72, Asp-98, and Asn-130. His-131 (proton donor) is an active-site residue. Residues His-180 and His-254 each coordinate Mn(2+). A Leucine methyl ester modification is found at Leu-322.

This sequence belongs to the PPP phosphatase family. PP-2A subfamily. Mn(2+) is required as a cofactor.

It catalyses the reaction O-phospho-L-seryl-[protein] + H2O = L-seryl-[protein] + phosphate. The enzyme catalyses O-phospho-L-threonyl-[protein] + H2O = L-threonyl-[protein] + phosphate. Functionally, essential role in cell cycle control. PP2A may be involved in controlling the entry into mitosis, possibly acting as an inhibitor. This is Major serine/threonine-protein phosphatase PP2A-2 catalytic subunit (ppa2) from Schizosaccharomyces pombe (strain 972 / ATCC 24843) (Fission yeast).